Reading from the N-terminus, the 119-residue chain is Small ribosomal subunit protein uS13 (119 aa).

The segment covering 94–113 (GLPVRGQRTKTNARTRKGPR) has biased composition (basic residues). Positions 94–119 (GLPVRGQRTKTNARTRKGPRKAIGAK) are disordered.

It belongs to the universal ribosomal protein uS13 family. Part of the 30S ribosomal subunit. Forms a loose heterodimer with protein S19. Forms two bridges to the 50S subunit in the 70S ribosome.

Located at the top of the head of the 30S subunit, it contacts several helices of the 16S rRNA. In the 70S ribosome it contacts the 23S rRNA (bridge B1a) and protein L5 of the 50S subunit (bridge B1b), connecting the 2 subunits; these bridges are implicated in subunit movement. Contacts the tRNAs in the A and P-sites. This Nitrosomonas europaea (strain ATCC 19718 / CIP 103999 / KCTC 2705 / NBRC 14298) protein is Small ribosomal subunit protein uS13.